The chain runs to 70 residues: Conotoxin Lt11.2 (70 aa).

Residues 1–26 form the signal peptide; sequence MMFRLTSVSCFLLFIVFLNLVVLTNA. 4 disulfide bridges follow: Cys27/Cys41, Cys34/Cys46, Cys40/Cys50, and Cys45/Cys54. Pro57 bears the Proline amide mark. A propeptide spanning residues 61–70 is cleaved from the precursor; that stretch reads EKLQEFFRQR.

Belongs to the conotoxin I2 superfamily. Expressed by the venom duct.

It localises to the secreted. The chain is Conotoxin Lt11.2 from Conus litteratus (Lettered cone).